A 345-amino-acid chain; its full sequence is Phosphoribosylformylglycinamidine cyclo-ligase (345 aa).

This sequence belongs to the AIR synthase family.

It localises to the cytoplasm. It carries out the reaction 2-formamido-N(1)-(5-O-phospho-beta-D-ribosyl)acetamidine + ATP = 5-amino-1-(5-phospho-beta-D-ribosyl)imidazole + ADP + phosphate + H(+). The protein operates within purine metabolism; IMP biosynthesis via de novo pathway; 5-amino-1-(5-phospho-D-ribosyl)imidazole from N(2)-formyl-N(1)-(5-phospho-D-ribosyl)glycinamide: step 2/2. The chain is Phosphoribosylformylglycinamidine cyclo-ligase from Shewanella frigidimarina (strain NCIMB 400).